The sequence spans 618 residues: Putative UDP-glucuronate:xylan alpha-glucuronosyltransferase 3 (618 aa).

A helical; Signal-anchor for type II membrane protein transmembrane segment spans residues 32–54; sequence GVKFNTLKLVLICIMLGALFTIY. Positions 379 and 381 each coordinate Mn(2+). Residues 379–381, 408–410, 435–439, and 489–495 each bind substrate; these read DAD, NSG, NGGDQ, and HYLGYNK. A Mn(2+)-binding site is contributed by histidine 489. Positions 598–608 are enriched in low complexity; the sequence is TNNSSTTTTSS. Residues 598-618 form a disordered region; that stretch reads TNNSSTTTTSSPPHKTALPSL.

The protein belongs to the glycosyltransferase 8 family. Glycogenin subfamily. Mn(2+) serves as cofactor.

The protein resides in the golgi apparatus membrane. May be involved in the substitutions of the xylan backbone in stem glucuronoxylan. This chain is Putative UDP-glucuronate:xylan alpha-glucuronosyltransferase 3 (GUX3), found in Arabidopsis thaliana (Mouse-ear cress).